The chain runs to 181 residues: UPF0397 protein str0306 (181 aa).

The next 5 helical transmembrane spans lie at 11–31 (ATGI…IPIF), 45–65 (LFSV…GHAL), 72–92 (GNIS…IGLF), 109–129 (IWFN…VTPI), and 147–167 (FVAG…LLAI).

It belongs to the UPF0397 family.

The protein localises to the cell membrane. The polypeptide is UPF0397 protein str0306 (Streptococcus thermophilus (strain CNRZ 1066)).